A 590-amino-acid chain; its full sequence is Protein NRT1/ PTR FAMILY 8.5 (590 aa).

A helical membrane pass occupies residues 96–116; sequence ASDVMIWQGTCYITPLIGAVI. Residue threonine 126 is modified to Phosphothreonine. The next 10 helical transmembrane spans lie at 130-150, 168-188, 214-234, 242-262, 365-385, 401-421, 445-465, 478-498, 524-544, and 562-582; these read FSAI…LPVL, TVQY…TGGI, FFNW…TLLV, WGLG…SFFI, FPIW…STLF, IPPA…IPIY, MGIG…VETV, IFWQ…FFIG, AVGS…TALG, and FFWL…LICV.

This sequence belongs to the major facilitator superfamily. Proton-dependent oligopeptide transporter (POT/PTR) (TC 2.A.17) family. As to expression, expressed in shoots, roots, stems, leaves, flowers and siliques.

Its subcellular location is the membrane. The polypeptide is Protein NRT1/ PTR FAMILY 8.5 (NPF8.5) (Arabidopsis thaliana (Mouse-ear cress)).